We begin with the raw amino-acid sequence, 500 residues long: Na(+)/H(+) antiporter NhaB (500 aa).

Transmembrane regions (helical) follow at residues 34 to 54 (PLFFAVSPAAAGWCLVIEFIF), 62 to 82 (CYPLMPGGLLLVQALVLGMTT), 90 to 110 (LVHNFPVILLLMFMVAGIYFM), 129 to 149 (ALLGLLFCFLSAFLSAFLDAL), 150 to 170 (TVTAVIISAAVGFYSVYHRVA), 205 to 225 (LLMHGAVGTALGGVCTLVGEP), 241 to 261 (FFSKVAPVSMPVLAAGLVTCV), 311 to 331 (ILIVALALHVAEVGLIGLLVI), 350 to 370 (FKDAMPFTALLVVFFAVVAVI), 394 to 414 (MLFIANGLLSAISDNVFVATI), 449 to 469 (VATPNGQAAFLFLLTSAIAPL), and 477 to 497 (MVWMALPYTVVMGLLGWYAVS).

The protein belongs to the NhaB Na(+)/H(+) (TC 2.A.34) antiporter family.

It localises to the cell inner membrane. The catalysed reaction is 2 Na(+)(in) + 3 H(+)(out) = 2 Na(+)(out) + 3 H(+)(in). Functionally, na(+)/H(+) antiporter that extrudes sodium in exchange for external protons. The protein is Na(+)/H(+) antiporter NhaB of Pseudomonas fluorescens (strain ATCC BAA-477 / NRRL B-23932 / Pf-5).